Reading from the N-terminus, the 162-residue chain is MERFFENAMYASRWLLAPIYMGLSLALLALTIKFFQEIFHVIPNIFAMAEADLILVLLSLIDMALVGGLLVMVMISGYENFVSQLDIDEGKEKLSWLGKMDSGSLKNKVAASIVAISSIHLLRIFMDAKNVPDNKLMWYVIIHMTFVLSAFAMGYLDKQTRH.

3 helical membrane-spanning segments follow: residues 10–32 (YASR…ALTI), 53–75 (LILV…MVMI), and 136–156 (LMWY…MGYL).

This sequence belongs to the UPF0114 family.

It localises to the cell membrane. The sequence is that of UPF0114 protein PA4574 from Pseudomonas aeruginosa (strain ATCC 15692 / DSM 22644 / CIP 104116 / JCM 14847 / LMG 12228 / 1C / PRS 101 / PAO1).